The sequence spans 255 residues: Cell division protein DivIB (255 aa).

Residues 1–30 (MKNSKVIKLQDRVPKLKNQKKRNKPPVNHR) lie on the Cytoplasmic side of the membrane. Residues 31 to 51 (LILYISILFLLVLFLIYFRSP) form a helical membrane-spanning segment. The Extracellular portion of the chain corresponds to 52 to 255 (LSNIKKISVF…FKYLDDEKKK (204 aa)). A POTRA domain is found at 53–121 (SNIKKISVFG…NKIDIHIEEY (69 aa)).

Belongs to the FtsQ/DivIB family. DivIB subfamily.

The protein resides in the cell membrane. Cell division protein that may be involved in stabilizing or promoting the assembly of the division complex. This chain is Cell division protein DivIB, found in Bacillus cytotoxicus (strain DSM 22905 / CIP 110041 / 391-98 / NVH 391-98).